Consider the following 609-residue polypeptide: UvrABC system protein C (609 aa).

Residues 16-94 enclose the GIY-YIG domain; sequence SSAGVYRMYD…IKQYMPKYNV (79 aa). The UVR domain maps to 203–238; sequence KQVISELVAKMEEAAEQQAYEQAARFRDQIMALRRV.

The protein belongs to the UvrC family. As to quaternary structure, interacts with UvrB in an incision complex.

The protein resides in the cytoplasm. The UvrABC repair system catalyzes the recognition and processing of DNA lesions. UvrC both incises the 5' and 3' sides of the lesion. The N-terminal half is responsible for the 3' incision and the C-terminal half is responsible for the 5' incision. The chain is UvrABC system protein C from Shewanella oneidensis (strain ATCC 700550 / JCM 31522 / CIP 106686 / LMG 19005 / NCIMB 14063 / MR-1).